A 401-amino-acid polypeptide reads, in one-letter code: Nodal homolog 3-B (401 aa).

The first 18 residues, 1–18 (MAFLSLFLCLVFSSPLMA), serve as a signal peptide directing secretion. A propeptide spanning residues 19–274 (MPPALQGRKA…KVNGFRRLRR (256 aa)) is cleaved from the precursor. Residues Asn-168, Asn-337, and Asn-344 are each glycosylated (N-linked (GlcNAc...) asparagine). 2 cysteine pairs are disulfide-bonded: Cys-299–Cys-365 and Cys-328–Cys-396.

Belongs to the TGF-beta family. Monomer. The propeptide region interacts with bmp4 in a non-covalent manner. Expressed in the dorsal marginal region of late blastula, becoming restricted to the Spemann organizer at the early gastrula stage.

It is found in the secreted. Functionally, exhibits mesoderm-dorsalizing activity and neural-inducing activity, but lacks mesoderm-inducing activity. Regulates the expression of specific mesodermal and neural genes. Induces convergent extension movements at the embryonic midline by activating the fgf signaling pathway to induce t/bra expression in the organizer region. Acts with wnt11 to induce Spemann organizer cells and induce axis formation. The unprocessed protein antagonizes bmp-signaling. In Xenopus tropicalis (Western clawed frog), this protein is Nodal homolog 3-B.